The following is a 297-amino-acid chain: UDP-N-acetylenolpyruvoylglucosamine reductase (297 aa).

In terms of domain architecture, FAD-binding PCMH-type spans 22–195 (RVGGPAQYYA…LAGRFRLHRA (174 aa)). Residue arginine 169 is part of the active site. Catalysis depends on serine 223, which acts as the Proton donor. Residue glutamate 293 is part of the active site.

Belongs to the MurB family. It depends on FAD as a cofactor.

It is found in the cytoplasm. The enzyme catalyses UDP-N-acetyl-alpha-D-muramate + NADP(+) = UDP-N-acetyl-3-O-(1-carboxyvinyl)-alpha-D-glucosamine + NADPH + H(+). Its pathway is cell wall biogenesis; peptidoglycan biosynthesis. Functionally, cell wall formation. This is UDP-N-acetylenolpyruvoylglucosamine reductase from Chloroflexus aggregans (strain MD-66 / DSM 9485).